The sequence spans 313 residues: Ribonuclease Z (313 aa).

Zn(2+) is bound by residues histidine 63, histidine 65, aspartate 67, histidine 68, histidine 142, aspartate 212, and histidine 270. Aspartate 67 functions as the Proton acceptor in the catalytic mechanism.

Belongs to the RNase Z family. As to quaternary structure, homodimer. The cofactor is Zn(2+).

The catalysed reaction is Endonucleolytic cleavage of RNA, removing extra 3' nucleotides from tRNA precursor, generating 3' termini of tRNAs. A 3'-hydroxy group is left at the tRNA terminus and a 5'-phosphoryl group is left at the trailer molecule.. Functionally, zinc phosphodiesterase, which displays some tRNA 3'-processing endonuclease activity. Probably involved in tRNA maturation, by removing a 3'-trailer from precursor tRNA. The sequence is that of Ribonuclease Z from Enterococcus faecalis (strain ATCC 700802 / V583).